Consider the following 457-residue polypeptide: Phosphoglucosamine mutase (457 aa).

Residue S109 is the Phosphoserine intermediate of the active site. The Mg(2+) site is built by S109, D251, D253, and D255. S109 is modified (phosphoserine).

The protein belongs to the phosphohexose mutase family. Mg(2+) serves as cofactor. Post-translationally, activated by phosphorylation.

The catalysed reaction is alpha-D-glucosamine 1-phosphate = D-glucosamine 6-phosphate. In terms of biological role, catalyzes the conversion of glucosamine-6-phosphate to glucosamine-1-phosphate. The protein is Phosphoglucosamine mutase of Bdellovibrio bacteriovorus (strain ATCC 15356 / DSM 50701 / NCIMB 9529 / HD100).